Here is a 93-residue protein sequence, read N- to C-terminus: Secretoglobin family 3A member 2 (93 aa).

An N-terminal signal peptide occupies residues 1-21; the sequence is MKLVTIFLLVTISLCSYSATA.

The protein belongs to the secretoglobin family. UGRP subfamily. As to quaternary structure, homodimer; disulfide-linked. Monomer. Interacts with APOA1. In terms of tissue distribution, highly expressed in lung and trachea. Detected throughout the airway epithelium in lung, with slightly higher expression in large airways. Found in lung submucosal gland acinus where it localizes to serous-like cells. Probably expressed in club cells of the bronchioles. Not detected in other tissues tested.

Its subcellular location is the secreted. Functionally, secreted cytokine-like protein. Binds to the scavenger receptor MARCO. Can also bind to pathogens including the Gram-positive bacterium L.monocytogenes, the Gram-negative bacterium P.aeruginosa, and yeast. Strongly inhibits phospholipase A2 (PLA2G1B) activity. Seems to have anti-inflammatory effects in respiratory epithelium. Also has anti-fibrotic activity in lung. May play a role in fetal lung development and maturation. Promotes branching morphogenesis during early stages of lung development. In the pituitary, may inhibit production of follicle-stimulating hormone (FSH) and luteinizing hormone (LH). The sequence is that of Secretoglobin family 3A member 2 (SCGB3A2) from Homo sapiens (Human).